The sequence spans 236 residues: Small ribosomal subunit protein uS3 (236 aa).

The region spanning 39–107 (VRHFLMQKLS…PTQLNIAEVR (69 aa)) is the KH type-2 domain.

Belongs to the universal ribosomal protein uS3 family. Part of the 30S ribosomal subunit. Forms a tight complex with proteins S10 and S14.

Its function is as follows. Binds the lower part of the 30S subunit head. Binds mRNA in the 70S ribosome, positioning it for translation. This is Small ribosomal subunit protein uS3 from Blochmanniella pennsylvanica (strain BPEN).